A 519-amino-acid chain; its full sequence is Fatty acid--[acyl-carrier-protein] ligase ScoC (519 aa).

T167 is a Mg(2+) binding site. Residues I216 and T312 each coordinate ATP. E313 is a binding site for Mg(2+). Residues D394 and K411 each coordinate ATP.

It belongs to the ATP-dependent AMP-binding enzyme family. The cofactor is Mg(2+).

It carries out the reaction a medium-chain fatty acid + holo-[ACP] + ATP = a medium-chain fatty acyl-[ACP] + AMP + diphosphate. It catalyses the reaction a medium-chain fatty acid + ATP + H(+) = a medium-chain fatty acyl-AMP + diphosphate. The catalysed reaction is a medium-chain fatty acyl-AMP + holo-[ACP] = a medium-chain fatty acyl-[ACP] + AMP + H(+). The enzyme catalyses octanoate + holo-[ACP] + ATP = octanoyl-[ACP] + AMP + diphosphate. It carries out the reaction octanoate + ATP + H(+) = octanoyl-AMP + diphosphate. It catalyses the reaction octanoyl-AMP + holo-[ACP] = octanoyl-[ACP] + AMP + H(+). The catalysed reaction is a (2E)-enoyl fatty acid + holo-[ACP] + ATP = a (2E)-enoyl-[ACP] + AMP + diphosphate. The enzyme catalyses a (2E)-enoyl fatty acid + ATP + H(+) = a (2E)-2-fatty-enoyl-AMP + diphosphate. It carries out the reaction a (2E)-2-fatty-enoyl-AMP + holo-[ACP] = a (2E)-enoyl-[ACP] + AMP + H(+). It catalyses the reaction (2E)-2-butenoate + holo-[ACP] + ATP = (2E)-butenoyl-[ACP] + AMP + diphosphate. The catalysed reaction is (2E)-2-butenoate + ATP + H(+) = (2E)-but-2-enoyl-AMP + diphosphate. The enzyme catalyses (2E)-but-2-enoyl-AMP + holo-[ACP] = (2E)-butenoyl-[ACP] + AMP + H(+). It carries out the reaction a (3R)-3-isocyanyl-fatty acid + holo-[ACP] + ATP = a (3R)-3-isocyanyl-fatty acyl-[ACP] + AMP + diphosphate. It catalyses the reaction a (3R)-3-isocyanyl-fatty acid + ATP + H(+) = a (3R)-3-isocyanyl-fatty acyl-AMP + diphosphate. The catalysed reaction is a (3R)-3-isocyanyl-fatty acyl-AMP + holo-[ACP] = a (3R)-3-isocyanyl-fatty acyl-[ACP] + AMP + H(+). The enzyme catalyses (3R)-3-isocyanylbutanoate + holo-[ACP] + ATP = (3R)-3-isocyanylbutanoyl-[ACP] + AMP + diphosphate. It carries out the reaction (3R)-3-isocyanylbutanoate + ATP + H(+) = (3R)-3-isocyanylbutanoyl-AMP + diphosphate. It catalyses the reaction (3R)-3-isocyanylbutanoyl-AMP + holo-[ACP] = (3R)-3-isocyanylbutanoyl-[ACP] + AMP + H(+). Functionally, acyl:acyl-carrier protein ligase involved in the biosynthesis of a unique class of isonitrile lipopeptides (INLPs). Shows a strong preference for fatty acids with a short/medium-chain length (C4-C8) in vitro, and accepts alpha,beta-unsaturated fatty acids such as crotonate, which seems to be a physiological substrate. Acts twice during the INLP pathway, catalyzing the activation of crotonate ((2E)-2-butenoate) as well as (3R)-3-isocyanylbutanoate as acyl-adenylates (acyl-AMP), and then the acyl transfer to the dedicated acyl-carrier protein ScoB. This Streptomyces coeruleorubidus protein is Fatty acid--[acyl-carrier-protein] ligase ScoC.